The following is a 443-amino-acid chain: MARIPLEFLSITLPVLLLAYCLAIEYEVSLPTIAHTSPASNPEEYLQSIYEQLNLDLPSTCTVNHLSAFDNTPTSLLNFSTSPVEHFDAPKLPSGLNATAGEQWAFDGTSSSGRSGLLLGIYRDASYAFLGPGNFRLSLDLVWDNSTTWSTVDYLSSSTVHTCTDKVVGIWSHSADHYYVFTVTADAKHARIHFHTPDVVGAVDLYSTTPARYPDGALFPSEVSVTQNAPMLHWVEPIPGGLIDVDLKVKDTPFRWTGLGGHERWWSAKGWLDLMTHWEAVRLMAGPYVLSFWQPTSRVNGVAYPSAFLTKYGEKVFSAVSGKVSEVEDYILYRPVRMEKQARETGYEVDLVSPAQGRRWVFGLEYRNQEFEFELGDAAGGRAYVGRAKGGEVHADDKPEEPSEGVFFIEHVDVKALTVPRAYVVVSFEFGPPIHGADIWVAC.

The signal sequence occupies residues methionine 1–alanine 23. Residues asparagine 78, asparagine 97, and asparagine 145 are each glycosylated (N-linked (GlcNAc...) asparagine).

This sequence belongs to the Diels-Alderase family.

It participates in secondary metabolite biosynthesis. Diels-Alderase; part of the gene cluster that mediates the biosynthesis of oxaleimides, cytotoxic compounds containing an unusual disubstituted succinimide moiety. The first step of the pathway is provided by the HR-PKS poxF that serves in a new mode of collaborative biosynthesis with the PKS-NRPS poxE, by providing the olefin containing amino acid substrate via the synthesis of an ACP-bound dec-4-enoate. The cytochrome P450 monooxygenase poxM-catalyzed oxidation at the alpha-position creates the enzyme-bound 2-hydroxydec-4-enoyl-ACP thioester, which may be prone to spontaneous hydrolysis to yield 2-hydroxydec-4-enoic acid due to increased electrophilicity of the carbonyl. 2-hydroxydec-4-enoic acid can then be further oxidized by poxM to yield the alpha-ketoacid 2-oxodec-4-enoicacid, which is reductively aminated by the aminotransferase poxL to yield (S,E)-2-aminodec-4-enoic acid. The Hybrid PKS-NRPS synthetase poxE then performs condensation between the octaketide product of its PKS modules and the amino group of (S,E)-2-aminodec-4-enoic acid which is activated and incorporated by the adenylation domain. The resulting aminoacyl product can be cyclized by the Diels-Alderase PoxQ and reductively released by the reductive (R) domain of poxE to yield an aldehyde intermediate. The released aldehyde is then substrate for a Knoevenagel condensation by the hydrolyase poxO followed by an oxidation at the 5-position of the pyrrolidone ring. The presence of the olefin from the amino acid building block allows for migration of the substituted allyl group to occur. This allylic transposition reaction takes place in a conjugate addition, semipinacol-like fashion to yield a succinimide intermediate. Iterative two-electron oxidations of the C7 methyl of the succinimide intermediate to the carboxylic acid can be catalyzed by one of two remaining cytochrome P450 monooxygenasess poxC or poxD to yield oxaleimide A. Subsequent oxidation yields the maleimide scaffold oxaleimide I. Both oxaleimide A and oxaleimide I can undergo oxidative modifications in the decalin ring to yield the series of products oxaleimides B to H. The chain is Diels-Alderase poxQ from Penicillium oxalicum.